The chain runs to 190 residues: MDILKDKIRSEGIVLSEHVLKVDAFLNHQIDPQLMQQVGHAFAMRFRDQGITKIVTIEASGIAPAVMAGLELGVPVIFARKYQSLTLKDNLYISKVFSFTKQTESTIAISAKHLNAHDHVLVIDDFLANGHAAKALIDLIGQAGASIAGLGIVIEKSFQDGRALLESEGYRVESLARVKSLAGGQVEFLD.

Xanthine is bound by residues Leu20 and Asn27. 128 to 132 contributes to the 5-phospho-alpha-D-ribose 1-diphosphate binding site; that stretch reads ANGHA. Residue Lys156 participates in xanthine binding.

Belongs to the purine/pyrimidine phosphoribosyltransferase family. Xpt subfamily. Homodimer.

Its subcellular location is the cytoplasm. The catalysed reaction is XMP + diphosphate = xanthine + 5-phospho-alpha-D-ribose 1-diphosphate. Its pathway is purine metabolism; XMP biosynthesis via salvage pathway; XMP from xanthine: step 1/1. Its function is as follows. Converts the preformed base xanthine, a product of nucleic acid breakdown, to xanthosine 5'-monophosphate (XMP), so it can be reused for RNA or DNA synthesis. This is Xanthine phosphoribosyltransferase from Pseudomonas aeruginosa (strain LESB58).